A 204-amino-acid polypeptide reads, in one-letter code: dITP/XTP pyrophosphatase (204 aa).

11-16 (SRNRKK) lines the substrate pocket. Catalysis depends on D76, which acts as the Proton acceptor. Residue D76 participates in Mg(2+) binding. Substrate is bound by residues S77, 158 to 161 (FGYD), K181, and 186 to 187 (HR).

This sequence belongs to the HAM1 NTPase family. As to quaternary structure, homodimer. Mg(2+) serves as cofactor.

The enzyme catalyses XTP + H2O = XMP + diphosphate + H(+). It carries out the reaction dITP + H2O = dIMP + diphosphate + H(+). The catalysed reaction is ITP + H2O = IMP + diphosphate + H(+). Functionally, pyrophosphatase that catalyzes the hydrolysis of nucleoside triphosphates to their monophosphate derivatives, with a high preference for the non-canonical purine nucleotides XTP (xanthosine triphosphate), dITP (deoxyinosine triphosphate) and ITP. Seems to function as a house-cleaning enzyme that removes non-canonical purine nucleotides from the nucleotide pool, thus preventing their incorporation into DNA/RNA and avoiding chromosomal lesions. This chain is dITP/XTP pyrophosphatase, found in Mycobacterium tuberculosis (strain CDC 1551 / Oshkosh).